The primary structure comprises 284 residues: NADH-cytochrome b5 reductase 1 (284 aa).

The chain crosses the membrane as a helical span at residues 8 to 28; sequence PFIIFATVAAIISSAVAYYFF. Positions 41-144 constitute an FAD-binding FR-type domain; it reads NDFQKFPLIE…RGPKGFFTYT (104 aa). FAD-binding positions include 124-139 and 150-182; these read ESKKIGETIDIRGPKG and SFGMIAGGTGITPMYQILTAILRNPEDKTKVSL.

Belongs to the flavoprotein pyridine nucleotide cytochrome reductase family. In terms of assembly, monomer. Component of the 2-(3-amino-3-carboxypropyl)histidine synthase complex composed of DPH1, DPH2, DPH3 and a NADH-dependent reductase, predominantly CBR1. FAD serves as cofactor.

Its subcellular location is the mitochondrion outer membrane. It catalyses the reaction 2 Fe(III)-[cytochrome b5] + NADH = 2 Fe(II)-[cytochrome b5] + NAD(+) + H(+). The enzyme catalyses 2 Fe(3+)-[Dph3] + NADH = 2 Fe(2+)-[Dph3] + NAD(+) + H(+). The protein operates within protein modification; peptidyl-diphthamide biosynthesis. In terms of biological role, NADH-dependent reductase for DPH3 and cytochrome b5. Required for the first step of diphthamide biosynthesis, a post-translational modification of histidine which occurs in elongation factor 2. DPH1 and DPH2 transfer a 3-amino-3-carboxypropyl (ACP) group from S-adenosyl-L-methionine (SAM) to a histidine residue, the reaction is assisted by a reduction system comprising DPH3 and a NADH-dependent reductase, predominantly CBR1. By reducing DPH3, also involved in the formation of the tRNA wobble base modification mcm5s 2U (5-methoxycarbonylmethyl-2-thiouridine), mediated by the elongator complex. The cytochrome b5/NADH cytochrome b5 reductase electron transfer system supports the catalytic activity of several sterol biosynthetic enzymes. This Debaryomyces hansenii (strain ATCC 36239 / CBS 767 / BCRC 21394 / JCM 1990 / NBRC 0083 / IGC 2968) (Yeast) protein is NADH-cytochrome b5 reductase 1 (CBR1).